The following is a 197-amino-acid chain: uncharacterized protein (197 aa).

This is an uncharacterized protein from Archaeoglobus fulgidus (strain ATCC 49558 / DSM 4304 / JCM 9628 / NBRC 100126 / VC-16).